The sequence spans 453 residues: MKLLLMLLFSGLMTGCRGNSSSASPPKLLLVSFDGFRADYLQNYEFPHLQNFIKEGVLVEQVKNVFITKTFPNHYSIVTGLYEESHGIVANSMYDVNTKKHFSDHNDKDPFWWNEAVPIWVTNQLQDNRSSAAAMWPGTDVPIHNSTPSYFMNYSPSVSFRERLGNVTTWLSSSNPPVTFATLYWEEPDASGHKYGPEDKENMRRVLEEIDEHIGELVHRLKVLGLWESLNVIITSDHGMTQCSKDRVINLDGCLDPSYYTLIDLTPVAAILPKINKTKVYSKLKVCDPHMNVYLKEDIPARFHYQHSDRIQPIILVADEGWTIVLNKSSLKLGDHGYDNSLPSMNPFLAAHGPAFHKGYKHSSINTVDIYPMMCHILGLKPHPNNGTFGHTKCLLVDQWCINLPEAIGIVIGALLVLTTLTCLIIIMQNRVSGPRPFSRLQLQEDDDDPLIG.

The first 18 residues, 1–18 (MKLLLMLLFSGLMTGCRG), serve as a signal peptide directing secretion. Over 19-407 (NSSSASPPKL…DQWCINLPEA (389 aa)) the chain is Extracellular. The Zn(2+) site is built by Asp-34 and Thr-70. Residue Thr-70 is the AMP-threonine intermediate of the active site. 2 residues coordinate substrate: Asn-91 and Tyr-154. Asn-166 carries N-linked (GlcNAc...) asparagine glycosylation. The Zn(2+) site is built by Asp-189, His-193, Asp-237, and His-238. A substrate-binding site is contributed by Asp-189. An intrachain disulfide couples Cys-254 to Cys-287. N-linked (GlcNAc...) asparagine glycosylation is present at Asn-276. His-336 serves as a coordination point for Zn(2+). A disulfide bridge connects residues Cys-394 and Cys-401. The chain crosses the membrane as a helical span at residues 408-428 (IGIVIGALLVLTTLTCLIIIM). Residues 429 to 453 (QNRVSGPRPFSRLQLQEDDDDPLIG) lie on the Cytoplasmic side of the membrane.

Belongs to the nucleotide pyrophosphatase/phosphodiesterase family. Zn(2+) is required as a cofactor.

The protein localises to the cell membrane. It catalyses the reaction P(1),P(3)-bis(5'-adenosyl) triphosphate + H2O = AMP + ADP + 2 H(+). Its function is as follows. Hydrolyzes extracellular Ap3A into AMP and ADP, and Ap4A into AMP and ATP. Ap3A and Ap4A are diadenosine polyphosphates thought to induce proliferation of vascular smooth muscle cells. Acts as a procoagulant, mediating platelet aggregation at the site of nascent thrombus via release of ADP from Ap3A and activation of ADP receptors. This is Bis(5'-adenosyl)-triphosphatase ENPP4 (ENPP4) from Bos taurus (Bovine).